Reading from the N-terminus, the 394-residue chain is MEGISALEKNVAELTVMDVYDIASAVGQEFERVIDQYGCEVIGRLMPKVVRVLEILEVLVSRNHINPEMEELRLELDRLRLERMDRIEKEKKHQKELELVEDVWRGEAQDLLNQIAQLQEENKQLVSNLSQKDINLTEEEFQKHEGMSERERQVMKKLKEVVDKQRDEIRAKDRELVLKNEDVEALQQQQSRLMKINHDLRHRVTVVEAQGKALIEQKVELEAYLQTKEQEAASMRLEIGKLRDKLKGEQHTNGEEIKTETLNEESILETEKLSLDLKDSNRPRFTLQELRDVLHERNELKAKVFMLQEELAYYKSEEADEEHKLPQSSPVIDSKAPIPQESGIKRLFSFFSRDKKRMPMMQKNVHFQESFGQWTEYNRDDVYTEQGQEALQHM.

The 88-residue stretch at 2 to 89 (EGISALEKNV…RLERMDRIEK (88 aa)) folds into the RH1 domain. A coiled-coil region spans residues 68–312 (EMEELRLELD…KVFMLQEELA (245 aa)). Residues 282–347 (RPRFTLQELR…IPQESGIKRL (66 aa)) form the RH2 domain. The segment at 318–337 (EADEEHKLPQSSPVIDSKAP) is disordered.

The protein belongs to the RILPL family.

The protein resides in the cytoplasm. It is found in the cytosol. It localises to the cytoskeleton. The protein localises to the microtubule organizing center. Its subcellular location is the centrosome. The protein resides in the cell projection. It is found in the cilium. In terms of biological role, plays a role in the regulation of cell shape and polarity. Plays a role in cellular protein transport, including protein transport away from primary cilia. Neuroprotective protein. This chain is RILP-like protein 1 (rilpl1), found in Xenopus tropicalis (Western clawed frog).